Reading from the N-terminus, the 1330-residue chain is G2/mitotic-specific cyclin-B3 (1330 aa).

Residues 1–50 form a disordered region; sequence MPLPLPSRSSKPETKKSRSSKIVPSGNNGQSEKRGENYQEKISSSSPRRL. A compositionally biased stretch (polar residues) spans 20–30; sequence SKIVPSGNNGQ. Residues 54–62 carry the D-box motif; sequence RSAFEDLTN. Positions 1002–1059 are disordered; sequence VETSSRVPSTPPESRAGMSSVGKLSTTSKSSVCESSSNKPSSSWGESSQKEMTPLEDI. The span at 1026 to 1048 shows a compositional bias: low complexity; the sequence is STTSKSSVCESSSNKPSSSWGES.

Belongs to the cyclin family. Cyclin AB subfamily. In terms of assembly, interacts with CDK2 kinase. Post-translationally, ubiquitinated. Ubiquitination leads to its degradation during anaphase entry, after degradation of CCNB1.

It is found in the nucleus. In terms of biological role, cyclins are positive regulatory subunits of the cyclin-dependent kinases (CDKs), and thereby play an essential role in the control of the cell cycle, notably via their destruction during cell division. Its tissue specificity suggest that it may be required during early meiotic prophase I. In Canis lupus familiaris (Dog), this protein is G2/mitotic-specific cyclin-B3 (CCNB3).